We begin with the raw amino-acid sequence, 348 residues long: Sulfate/thiosulfate import ATP-binding protein CysA (348 aa).

An ABC transporter domain is found at 3-237 (IEVRNIVKEF…PASAFVHGFI (235 aa)). An ATP-binding site is contributed by 35-42 (GPSGSGKT).

The protein belongs to the ABC transporter superfamily. Sulfate/tungstate importer (TC 3.A.1.6) family. The complex is composed of two ATP-binding proteins (CysA), two transmembrane proteins (CysT and CysW) and a solute-binding protein (CysP).

The protein localises to the cell inner membrane. The catalysed reaction is sulfate(out) + ATP + H2O = sulfate(in) + ADP + phosphate + H(+). It carries out the reaction thiosulfate(out) + ATP + H2O = thiosulfate(in) + ADP + phosphate + H(+). In terms of biological role, part of the ABC transporter complex CysAWTP involved in sulfate/thiosulfate import. Responsible for energy coupling to the transport system. This Rhodopseudomonas palustris (strain ATCC BAA-98 / CGA009) protein is Sulfate/thiosulfate import ATP-binding protein CysA.